Here is a 154-residue protein sequence, read N- to C-terminus: 6,7-dimethyl-8-ribityllumazine synthase (154 aa).

5-amino-6-(D-ribitylamino)uracil-binding positions include tryptophan 22, 56-58, and 80-82; these read AWE and CVI. Position 85 to 86 (85 to 86) interacts with (2S)-2-hydroxy-3-oxobutyl phosphate; that stretch reads DT. Histidine 88 serves as the catalytic Proton donor. Asparagine 113 contacts 5-amino-6-(D-ribitylamino)uracil. (2S)-2-hydroxy-3-oxobutyl phosphate is bound at residue arginine 127.

The protein belongs to the DMRL synthase family. Forms an icosahedral capsid composed of 60 subunits, arranged as a dodecamer of pentamers.

The catalysed reaction is (2S)-2-hydroxy-3-oxobutyl phosphate + 5-amino-6-(D-ribitylamino)uracil = 6,7-dimethyl-8-(1-D-ribityl)lumazine + phosphate + 2 H2O + H(+). The protein operates within cofactor biosynthesis; riboflavin biosynthesis; riboflavin from 2-hydroxy-3-oxobutyl phosphate and 5-amino-6-(D-ribitylamino)uracil: step 1/2. Functionally, catalyzes the formation of 6,7-dimethyl-8-ribityllumazine by condensation of 5-amino-6-(D-ribitylamino)uracil with 3,4-dihydroxy-2-butanone 4-phosphate. This is the penultimate step in the biosynthesis of riboflavin. This chain is 6,7-dimethyl-8-ribityllumazine synthase, found in Xanthomonas campestris pv. campestris (strain 8004).